The primary structure comprises 275 residues: DNA-directed RNA polymerase subunit Rpo3 (275 aa).

It belongs to the archaeal Rpo3/eukaryotic RPB3 RNA polymerase subunit family. As to quaternary structure, part of the RNA polymerase complex.

The protein resides in the cytoplasm. It catalyses the reaction RNA(n) + a ribonucleoside 5'-triphosphate = RNA(n+1) + diphosphate. DNA-dependent RNA polymerase (RNAP) catalyzes the transcription of DNA into RNA using the four ribonucleoside triphosphates as substrates. In Methanopyrus kandleri (strain AV19 / DSM 6324 / JCM 9639 / NBRC 100938), this protein is DNA-directed RNA polymerase subunit Rpo3.